The sequence spans 342 residues: L-threonine 3-dehydrogenase (342 aa).

Position 38 (Cys-38) interacts with Zn(2+). Catalysis depends on charge relay system residues Thr-40 and His-43. Zn(2+)-binding residues include His-63 and Glu-64. NAD(+) is bound by residues Ile-175, Asp-195, Arg-200, Leu-263–Ile-265, and Val-287–Tyr-288.

It belongs to the zinc-containing alcohol dehydrogenase family. As to quaternary structure, homotetramer. The cofactor is Zn(2+).

The protein localises to the cytoplasm. The enzyme catalyses L-threonine + NAD(+) = (2S)-2-amino-3-oxobutanoate + NADH + H(+). It functions in the pathway amino-acid degradation; L-threonine degradation via oxydo-reductase pathway; glycine from L-threonine: step 1/2. Its function is as follows. Catalyzes the NAD(+)-dependent oxidation of L-threonine to 2-amino-3-ketobutyrate. This chain is L-threonine 3-dehydrogenase, found in Ruegeria pomeroyi (strain ATCC 700808 / DSM 15171 / DSS-3) (Silicibacter pomeroyi).